Reading from the N-terminus, the 391-residue chain is Formate-dependent phosphoribosylglycinamide formyltransferase (391 aa).

N(1)-(5-phospho-beta-D-ribosyl)glycinamide-binding positions include 20 to 21 (EL) and Glu-80. ATP is bound by residues Arg-112, Lys-153, 158 to 163 (SSGKGQ), 193 to 196 (EGFI), and Glu-201. Residues 117-306 (RLAAEDLQIP…EFALHVRAFL (190 aa)) enclose the ATP-grasp domain. Residues Glu-265 and Glu-277 each coordinate Mg(2+). N(1)-(5-phospho-beta-D-ribosyl)glycinamide contacts are provided by residues Asp-284, Lys-354, and 361–362 (RR).

The protein belongs to the PurK/PurT family. In terms of assembly, homodimer.

It carries out the reaction N(1)-(5-phospho-beta-D-ribosyl)glycinamide + formate + ATP = N(2)-formyl-N(1)-(5-phospho-beta-D-ribosyl)glycinamide + ADP + phosphate + H(+). It functions in the pathway purine metabolism; IMP biosynthesis via de novo pathway; N(2)-formyl-N(1)-(5-phospho-D-ribosyl)glycinamide from N(1)-(5-phospho-D-ribosyl)glycinamide (formate route): step 1/1. In terms of biological role, involved in the de novo purine biosynthesis. Catalyzes the transfer of formate to 5-phospho-ribosyl-glycinamide (GAR), producing 5-phospho-ribosyl-N-formylglycinamide (FGAR). Formate is provided by PurU via hydrolysis of 10-formyl-tetrahydrofolate. This chain is Formate-dependent phosphoribosylglycinamide formyltransferase, found in Photobacterium profundum (strain SS9).